We begin with the raw amino-acid sequence, 813 residues long: Leucine--tRNA ligase (813 aa).

Residues 41 to 51 (PYPSGTLHMGH) carry the 'HIGH' region motif. The short motif at 575 to 579 (KMSKS) is the 'KMSKS' region element. Residue Lys-578 participates in ATP binding.

The protein belongs to the class-I aminoacyl-tRNA synthetase family.

It is found in the cytoplasm. It catalyses the reaction tRNA(Leu) + L-leucine + ATP = L-leucyl-tRNA(Leu) + AMP + diphosphate. The polypeptide is Leucine--tRNA ligase (Francisella tularensis subsp. tularensis (strain FSC 198)).